We begin with the raw amino-acid sequence, 451 residues long: CDP-diacylglycerol--serine O-phosphatidyltransferase PssA (451 aa).

2 consecutive PLD phosphodiesterase domains span residues 27–224 (VDFF…ELRD) and 239–451 (SVTP…SRIL). The a CDP-1,2-diacyl-sn-glycerol site is built by L56, Y57, R91, R94, R96, I97, E132, A133, V136, H138, K140, G152, Y159, and R167. H138 is a catalytic residue. Residue D169 is part of the active site. A CDP-1,2-diacyl-sn-glycerol-binding residues include Y273, D305, F306, I316, I317, L320, L323, and Y324. H357 is an active-site residue. K359, N374, and R378 together coordinate a CDP-1,2-diacyl-sn-glycerol. Residue E385 is part of the active site. A CDP-1,2-diacyl-sn-glycerol-binding residues include L438, I447, I450, and L451.

It belongs to the CDP-alcohol phosphatidyltransferase class-II family. As to quaternary structure, multimeric. Interacts with ACP, YbgC and PlsB, forming altogether a complex at the inner membrane. Monomeric and dimeric; existing in equilibrium, but the monomer probably exhibits preferential membrane association.

The protein resides in the cytoplasm. Its subcellular location is the cell inner membrane. It catalyses the reaction a CDP-1,2-diacyl-sn-glycerol + L-serine = a 1,2-diacyl-sn-glycero-3-phospho-L-serine + CMP + H(+). The protein operates within phospholipid metabolism; phosphatidylethanolamine biosynthesis; phosphatidylethanolamine from CDP-diacylglycerol: step 1/2. Its function is as follows. Catalyzes the conversion of cytidine diphosphate diacylglycerol (CDP-DG) and L-serine into phosphatidylserine. Essential for biosynthesis of phosphatidylethanolamine, one of the major membrane phospholipids. Phosphatidylserine is later converted into phosphatidylethanolamine via the action of phosphatidylserine decarboxylase psd. Associates with the bacterial membrane for its role, which depends on the levels of anionic phospholipids in the membrane. This is CDP-diacylglycerol--serine O-phosphatidyltransferase PssA (pssA) from Escherichia coli (strain K12).